The primary structure comprises 431 residues: Maintenance of mitochondrial morphology protein 1 (431 aa).

Residues 1–103 (MVSALEVKSI…QLISWSFAQG (103 aa)) lie on the Lumenal side of the membrane. Residues 104–124 (LIIGQLSVVIFLIFFVKFFIF) form a helical membrane-spanning segment. The Cytoplasmic portion of the chain corresponds to 125-431 (TDASSKMDNP…EDESSKTPHS (307 aa)). The 213-residue stretch at 192-404 (SAESLDWFNV…EPRFQSVKLP (213 aa)) folds into the SMP-LTD domain. The segment at 412–431 (NTREEVIHKTEDESSKTPHS) is disordered.

This sequence belongs to the MMM1 family. In terms of assembly, homodimer. Component of the ER-mitochondria encounter structure (ERMES) or MDM complex, composed of MMM1, MDM10, MDM12 and MDM34. An MMM1 homodimer associates with one molecule of MDM12 on each side in a pairwise head-to-tail manner, and the SMP-LTD domains of MMM1 and MDM12 generate a continuous hydrophobic tunnel for phospholipid trafficking.

It localises to the endoplasmic reticulum membrane. In terms of biological role, component of the ERMES/MDM complex, which serves as a molecular tether to connect the endoplasmic reticulum (ER) and mitochondria. Components of this complex are involved in the control of mitochondrial shape and protein biogenesis, and function in nonvesicular lipid trafficking between the ER and mitochondria. The MDM12-MMM1 subcomplex functions in the major beta-barrel assembly pathway that is responsible for biogenesis of all outer membrane beta-barrel proteins, and acts in a late step after the SAM complex. The MDM10-MDM12-MMM1 subcomplex further acts in the TOM40-specific pathway after the action of the MDM12-MMM1 complex. Essential for establishing and maintaining the structure of mitochondria and maintenance of mtDNA nucleoids. This chain is Maintenance of mitochondrial morphology protein 1, found in Candida glabrata (strain ATCC 2001 / BCRC 20586 / JCM 3761 / NBRC 0622 / NRRL Y-65 / CBS 138) (Yeast).